The chain runs to 293 residues: Elongation factor Ts (293 aa).

Residues 81 to 84 (TDFV) form an involved in Mg(2+) ion dislocation from EF-Tu region.

Belongs to the EF-Ts family.

The protein localises to the cytoplasm. In terms of biological role, associates with the EF-Tu.GDP complex and induces the exchange of GDP to GTP. It remains bound to the aminoacyl-tRNA.EF-Tu.GTP complex up to the GTP hydrolysis stage on the ribosome. The protein is Elongation factor Ts of Thioalkalivibrio sulfidiphilus (strain HL-EbGR7).